The primary structure comprises 1478 residues: ATP-binding cassette transporter abc2 (1478 aa).

The Vacuolar portion of the chain corresponds to 1–25; sequence MVLEQDLDPFVGGNWMNSAYKGFTF. A helical membrane pass occupies residues 26-46; sequence LSATWLAPNIYLLISGCLQYF. Residues 47–65 are Cytoplasmic-facing; the sequence is YEVRKRSHYFHFRRFWTIW. The helical transmembrane segment at 66–85 threads the bilayer; it reads LKSLVIMVLLFTHIYDCYKT. A glycan (N-linked (GlcNAc...) asparagine) is linked at Asn86. At 86-90 the chain is on the vacuolar side; that stretch reads NESVW. A helical membrane pass occupies residues 91 to 104; sequence NVLSIITYFLALFL. Over 105-116 the chain is Cytoplasmic; sequence HVVEQPTLRIPM. Residues 117–137 form a helical membrane-spanning segment; sequence ASLLMFWLFKFLASALVLLLR. Residues 138–154 are Vacuolar-facing; that stretch reads PNYTMFPMLNVVPSITF. The N-linked (GlcNAc...) asparagine glycan is linked to Asn139. A helical transmembrane segment spans residues 155–175; it reads FCSLVCLLAEIYVPPANRVWY. The Cytoplasmic segment spans residues 176 to 259; it reads PDDAAELEET…KKSSLYMWGV (84 aa). Residues 260 to 280 traverse the membrane as a helical segment; the sequence is LFLNHWKLTVVIIVLKLVQDV. The ABC transmembrane type-1 1 domain occupies 268 to 557; sequence TVVIIVLKLV…LPIVVSSVLE (290 aa). The Vacuolar portion of the chain corresponds to 281–310; it reads VAFIQPNLIRKIVIFVSSYSSEHPQPPQVG. A helical transmembrane segment spans residues 311 to 331; sequence FSLAIAMFLTNVVQTALLQQY. The Cytoplasmic portion of the chain corresponds to 332-387; that stretch reads FQLGMVLGMRWRSELITAIYRKSLRLSSAARQSRSVGDIVNYMSVDTQKVCDLTMF. A helical membrane pass occupies residues 388 to 408; the sequence is LFVIVSGPFQIVLALTNLYHL. Topologically, residues 409-411 are vacuolar; sequence VGY. The chain crosses the membrane as a helical span at residues 412–432; that stretch reads GALSGAFVTFLLFPCNVVIAS. At 433–495 the chain is on the cytoplasmic side; the sequence is IFKRFQNRQM…MLKKIGIVNT (63 aa). The chain crosses the membrane as a helical span at residues 496–516; it reads IGNFTWLFAPILVSAATFGTF. Over 517–539 the chain is Vacuolar; the sequence is IVLYGKTRVLSVDIVFACLSLFN. A helical transmembrane segment spans residues 540–560; it reads LLQFPLTMLPIVVSSVLEASV. The Cytoplasmic segment spans residues 561-910; sequence AISRIYGFLT…VKWKVYWTYF (350 aa). In terms of domain architecture, ABC transporter 1 spans 593-821; the sequence is LEIKKGTFSW…PDSQLFQLLS (229 aa). Residue 631–638 participates in ATP binding; that stretch reads GKVGMGKS. A disordered region spans residues 828-867; that stretch reads TASSTGADTPLSRSQSVITSSTDVTSSASRSSDTVSNYPK. Over residues 829–840 the composition is skewed to polar residues; it reads ASSTGADTPLSR. Phosphoserine occurs at positions 839, 843, and 863. A compositionally biased stretch (low complexity) spans 841-863; the sequence is SQSVITSSTDVTSSASRSSDTVS. Residues 911 to 931 traverse the membrane as a helical segment; it reads KACSLFLIFLYFLFIIGGIGM. An ABC transmembrane type-1 2 domain is found at 918–1202; it reads IFLYFLFIIG…VVRQSVDVET (285 aa). Residues 932 to 968 are Vacuolar-facing; the sequence is NVGTNVWLKHWSEVNTQLGYNPKPYFYLGIYTLFGLL. Residues 969 to 990 traverse the membrane as a helical segment; sequence SCALISLSSLTITVFCAIKSCR. Residues 991–1033 are Cytoplasmic-facing; sequence YLHDSMVKAVLRAPMSFFETTPTGRILNRFSSDVYRVDEVISR. A helical transmembrane segment spans residues 1034–1054; sequence VFMFFFRNLFQIVFVLAVICY. A topological domain (vacuolar) is located at residue Ser1055. A helical membrane pass occupies residues 1056-1076; sequence SPMFMILIVPLFFLYRYNQVY. Over 1077-1147 the chain is Cytoplasmic; the sequence is YTQTSRELKR…SSNRWQAIRV (71 aa). The helical transmembrane segment at 1148 to 1168 threads the bilayer; it reads EAIGALVVFSSAFFGVLSAVR. Topologically, residues 1169 to 1172 are vacuolar; sequence GNPN. The helical transmembrane segment at 1173–1193 threads the bilayer; sequence SGLVGLSLSYAVQITQSLTFV. Residues 1194–1478 are Cytoplasmic-facing; that stretch reads VRQSVDVETN…YSLAKESGLI (285 aa). In terms of domain architecture, ABC transporter 2 spans 1239–1473; that stretch reads IKFDHYSVRY…KASLFYSLAK (235 aa). Position 1273–1280 (1273–1280) interacts with ATP; the sequence is GRTGAGKS.

Belongs to the ABC transporter superfamily. ABCC family. Conjugate transporter (TC 3.A.1.208) subfamily.

It is found in the vacuole membrane. Functionally, involved in vacuolar sequestration of glutathione S-conjugates. Together with abc4, required for accumulation of a red pigment (ade pigment) in the vacuole of a mutant affected in the adenine biosynthetic pathway. This Schizosaccharomyces pombe (strain 972 / ATCC 24843) (Fission yeast) protein is ATP-binding cassette transporter abc2 (abc2).